The primary structure comprises 211 residues: uncharacterized protein (211 aa).

The next 4 membrane-spanning stretches (helical) occupy residues 77–97 (FLMFHLFCNSALFAVGIAITI), 113–133 (GISVSVWLILAAYMIYWVLIG), 152–172 (ILISMVPNVIFMLVFLFNVIP), and 179–199 (LLTPWFVGTCAFATLLFPLFG).

It is found in the cell membrane. This is an uncharacterized protein from Bacillus subtilis (strain 168).